A 491-amino-acid polypeptide reads, in one-letter code: Cytochrome P450 2B4 (491 aa).

Phosphoserine; by PKA is present on Ser-128. Heme is bound at residue Cys-436.

This sequence belongs to the cytochrome P450 family. It depends on heme as a cofactor.

It localises to the endoplasmic reticulum membrane. Its subcellular location is the microsome membrane. It catalyses the reaction an organic molecule + reduced [NADPH--hemoprotein reductase] + O2 = an alcohol + oxidized [NADPH--hemoprotein reductase] + H2O + H(+). Functionally, cytochromes P450 are a group of heme-thiolate monooxygenases. In liver microsomes, this enzyme is involved in an NADPH-dependent electron transport pathway. It oxidizes a variety of structurally unrelated compounds, including steroids, fatty acids, and xenobiotics. In the epoxidation of arachidonic acid it has a unique preference for the 5,6-olefin. This is Cytochrome P450 2B4 (CYP2B4) from Oryctolagus cuniculus (Rabbit).